The sequence spans 158 residues: 2-C-methyl-D-erythritol 2,4-cyclodiphosphate synthase (158 aa).

2 residues coordinate a divalent metal cation: D8 and H10. Residues 8 to 10 (DVH) and 34 to 35 (HS) each bind 4-CDP-2-C-methyl-D-erythritol 2-phosphate. Residue H42 participates in a divalent metal cation binding. Residues 56–58 (DIG), 61–65 (FPDDD), 132–135 (TTFE), and F139 each bind 4-CDP-2-C-methyl-D-erythritol 2-phosphate.

The protein belongs to the IspF family. In terms of assembly, homotrimer. It depends on a divalent metal cation as a cofactor.

The catalysed reaction is 4-CDP-2-C-methyl-D-erythritol 2-phosphate = 2-C-methyl-D-erythritol 2,4-cyclic diphosphate + CMP. It functions in the pathway isoprenoid biosynthesis; isopentenyl diphosphate biosynthesis via DXP pathway; isopentenyl diphosphate from 1-deoxy-D-xylulose 5-phosphate: step 4/6. Involved in the biosynthesis of isopentenyl diphosphate (IPP) and dimethylallyl diphosphate (DMAPP), two major building blocks of isoprenoid compounds. Catalyzes the conversion of 4-diphosphocytidyl-2-C-methyl-D-erythritol 2-phosphate (CDP-ME2P) to 2-C-methyl-D-erythritol 2,4-cyclodiphosphate (ME-CPP) with a corresponding release of cytidine 5-monophosphate (CMP). The protein is 2-C-methyl-D-erythritol 2,4-cyclodiphosphate synthase of Natranaerobius thermophilus (strain ATCC BAA-1301 / DSM 18059 / JW/NM-WN-LF).